The primary structure comprises 211 residues: Wound-induced protein WIN2 (211 aa).

An N-terminal signal peptide occupies residues 1 to 25 (MVKLSCGPILLALVLCISLTSVANA). The region spanning 26 to 68 (QQCGRQRGGALCGNNLCCSQFGWCGSTPEYCSPSQGCQSQCTG) is the Chitin-binding type-1 domain. Intrachain disulfides connect C28-C43, C37-C49, C42-C56, and C62-C66. In terms of domain architecture, Barwin spans 77-198 (GSAQNVRATY…VNYQFVNCGD (122 aa)).

The polypeptide is Wound-induced protein WIN2 (WIN2) (Solanum tuberosum (Potato)).